We begin with the raw amino-acid sequence, 795 residues long: Endoplasmin (795 aa).

The N-terminal stretch at 1–21 is a signal peptide; sequence MKSAWALALACTLLLAASVTA. The short motif at 41–43 is the SRT pseudosubstrate motif element; it reads SRT. Residues N61 and N106 are each glycosylated (N-linked (GlcNAc...) asparagine). 4 residues coordinate ATP: N106, D148, N161, and F198. Residue N216 is glycosylated (N-linked (GlcNAc...) asparagine). Over residues 289–316 the composition is skewed to acidic residues; sequence EEPVEEEEAKEEKEETDDNEAAVEEEEE. A disordered region spans residues 289-322; that stretch reads EEPVEEEEAKEEKEETDDNEAAVEEEEEEKKPKT. N-linked (GlcNAc...) asparagine glycosylation is found at N444, N480, and N501. A disordered region spans residues 751–795; that stretch reads DAKVEEEPEEPEDAAEEAEQDEEEVDADAEDSETQKESTDVKDEL. The span at 756–782 shows a compositional bias: acidic residues; sequence EEPEEPEDAAEEAEQDEEEVDADAEDS. A compositionally biased stretch (basic and acidic residues) spans 783-795; the sequence is ETQKESTDVKDEL. The Prevents secretion from ER motif lies at 792–795; it reads KDEL.

It belongs to the heat shock protein 90 family. Homodimer; disulfide-linked.

The protein resides in the endoplasmic reticulum lumen. It is found in the sarcoplasmic reticulum lumen. The enzyme catalyses ATP + H2O = ADP + phosphate + H(+). Functionally, ATP-dependent chaperone involved in the processing of proteins in the endoplasmic reticulum, regulating their transport. This is Endoplasmin (HSP90B1) from Gallus gallus (Chicken).